The sequence spans 492 residues: Ferruginol synthase (492 aa).

The helical transmembrane segment at 1–21 threads the bilayer; that stretch reads MDPFPLVAAALFIAATWFITF. Residue Cys436 coordinates heme.

The protein belongs to the cytochrome P450 family. Heme serves as cofactor. Expressed in leaf glandular trichomes.

It localises to the membrane. It carries out the reaction abieta-8,11,13-triene + reduced [NADPH--hemoprotein reductase] + O2 = ferruginol + oxidized [NADPH--hemoprotein reductase] + H2O + H(+). The enzyme catalyses ferruginol + reduced [NADPH--hemoprotein reductase] + O2 = 11-hydroxyferruginol + oxidized [NADPH--hemoprotein reductase] + H2O + H(+). It catalyses the reaction miltiradiene + 2 reduced [NADPH--hemoprotein reductase] + 2 O2 = 11-oxomiltiradiene + 2 oxidized [NADPH--hemoprotein reductase] + 3 H2O + 2 H(+). Its pathway is secondary metabolite biosynthesis; terpenoid biosynthesis. Functionally, monooxygenase involved in the biosynthesis of labdane-related diterpenes natural products. Catalyzes the oxidation of abietatriene to produce ferruginol. Catalyzes the oxidation of ferruginol at C-12 to produce 11-hydroxyferruginol. Ferruginol and 11-hydroxyferruginol are intermediates in the biosynthesis of carnosate, a potent antioxidant. May also convert miltiradiene into 11-oxomiltiradiene. In Salvia fruticosa (Greek sage), this protein is Ferruginol synthase.